The chain runs to 481 residues: Protein nucleotidyltransferase YdiU (481 aa).

Residues Gly-85, Gly-87, Arg-88, Lys-108, Asp-120, Gly-121, Arg-172, and Arg-179 each coordinate ATP. The Proton acceptor role is filled by Asp-248. Positions 249 and 258 each coordinate Mg(2+). ATP is bound at residue Asp-258.

The protein belongs to the SELO family. Mg(2+) serves as cofactor. Mn(2+) is required as a cofactor.

It carries out the reaction L-seryl-[protein] + ATP = 3-O-(5'-adenylyl)-L-seryl-[protein] + diphosphate. The catalysed reaction is L-threonyl-[protein] + ATP = 3-O-(5'-adenylyl)-L-threonyl-[protein] + diphosphate. It catalyses the reaction L-tyrosyl-[protein] + ATP = O-(5'-adenylyl)-L-tyrosyl-[protein] + diphosphate. The enzyme catalyses L-histidyl-[protein] + UTP = N(tele)-(5'-uridylyl)-L-histidyl-[protein] + diphosphate. It carries out the reaction L-seryl-[protein] + UTP = O-(5'-uridylyl)-L-seryl-[protein] + diphosphate. The catalysed reaction is L-tyrosyl-[protein] + UTP = O-(5'-uridylyl)-L-tyrosyl-[protein] + diphosphate. Functionally, nucleotidyltransferase involved in the post-translational modification of proteins. It can catalyze the addition of adenosine monophosphate (AMP) or uridine monophosphate (UMP) to a protein, resulting in modifications known as AMPylation and UMPylation. This is Protein nucleotidyltransferase YdiU from Cereibacter sphaeroides (strain ATCC 17023 / DSM 158 / JCM 6121 / CCUG 31486 / LMG 2827 / NBRC 12203 / NCIMB 8253 / ATH 2.4.1.) (Rhodobacter sphaeroides).